We begin with the raw amino-acid sequence, 158 residues long: Cyclic pyranopterin monophosphate synthase (158 aa).

Substrate is bound by residues 75–77 and 113–114; these read LCH and ME. Asp-128 is a catalytic residue.

Belongs to the MoaC family. As to quaternary structure, homohexamer; trimer of dimers.

The catalysed reaction is (8S)-3',8-cyclo-7,8-dihydroguanosine 5'-triphosphate = cyclic pyranopterin phosphate + diphosphate. The protein operates within cofactor biosynthesis; molybdopterin biosynthesis. In terms of biological role, catalyzes the conversion of (8S)-3',8-cyclo-7,8-dihydroguanosine 5'-triphosphate to cyclic pyranopterin monophosphate (cPMP). The sequence is that of Cyclic pyranopterin monophosphate synthase from Azorhizobium caulinodans (strain ATCC 43989 / DSM 5975 / JCM 20966 / LMG 6465 / NBRC 14845 / NCIMB 13405 / ORS 571).